The chain runs to 557 residues: Dihydroxy-acid dehydratase (557 aa).

A [2Fe-2S] cluster-binding site is contributed by Cys50. Asp82 contacts Mg(2+). Cys123 is a [2Fe-2S] cluster binding site. Asp124 and Lys125 together coordinate Mg(2+). At Lys125 the chain carries N6-carboxylysine. Cys195 is a [2Fe-2S] cluster binding site. Glu447 contributes to the Mg(2+) binding site. Residue Ser473 is the Proton acceptor of the active site.

It belongs to the IlvD/Edd family. Homodimer. Requires [2Fe-2S] cluster as cofactor. Mg(2+) serves as cofactor.

The catalysed reaction is (2R)-2,3-dihydroxy-3-methylbutanoate = 3-methyl-2-oxobutanoate + H2O. It catalyses the reaction (2R,3R)-2,3-dihydroxy-3-methylpentanoate = (S)-3-methyl-2-oxopentanoate + H2O. The protein operates within amino-acid biosynthesis; L-isoleucine biosynthesis; L-isoleucine from 2-oxobutanoate: step 3/4. It functions in the pathway amino-acid biosynthesis; L-valine biosynthesis; L-valine from pyruvate: step 3/4. Functionally, functions in the biosynthesis of branched-chain amino acids. Catalyzes the dehydration of (2R,3R)-2,3-dihydroxy-3-methylpentanoate (2,3-dihydroxy-3-methylvalerate) into 2-oxo-3-methylpentanoate (2-oxo-3-methylvalerate) and of (2R)-2,3-dihydroxy-3-methylbutanoate (2,3-dihydroxyisovalerate) into 2-oxo-3-methylbutanoate (2-oxoisovalerate), the penultimate precursor to L-isoleucine and L-valine, respectively. In Ralstonia nicotianae (strain ATCC BAA-1114 / GMI1000) (Ralstonia solanacearum), this protein is Dihydroxy-acid dehydratase.